The chain runs to 385 residues: Polyketide synthase 3 (385 aa).

Cys-157 is a catalytic residue.

This sequence belongs to the thiolase-like superfamily. Chalcone/stilbene synthases family. Expressed in male and female flowers, and seedlings.

The protein resides in the cytoplasm. In terms of biological role, polyketide synthase responsible for the biosynthesis of secondary metabolites. In Cannabis sativa (Hemp), this protein is Polyketide synthase 3 (PKSF3).